The sequence spans 508 residues: Hydroxymethylglutaryl-CoA synthase, mitochondrial (508 aa).

The transit peptide at 1–37 (MQRLLAPARRVLQVKRAMQETSLTPAHLLSAAQQRFS) directs the protein to the mitochondrion. At Lys52 the chain carries N6-succinyllysine. (3S)-3-hydroxy-3-methylglutaryl-CoA contacts are provided by Glu80 and Ala81. Lys83 and Lys118 each carry N6-acetyllysine; alternate. N6-succinyllysine; alternate occurs at positions 83 and 118. Glu132 (proton donor/acceptor) is an active-site residue. Residues Cys166, Asn204, and Thr208 each coordinate (3S)-3-hydroxy-3-methylglutaryl-CoA. Catalysis depends on Cys166, which acts as the Acyl-thioester intermediate. Lys221 is modified (N6-succinyllysine). Lys243 carries the N6-acetyllysine modification. At Lys256 the chain carries N6-acetyllysine; alternate. Lys256 carries the post-translational modification N6-succinyllysine; alternate. Ser258 and His301 together coordinate (3S)-3-hydroxy-3-methylglutaryl-CoA. His301 functions as the Proton donor/acceptor in the catalytic mechanism. Lys306 carries the N6-acetyllysine modification. Lys310 contacts (3S)-3-hydroxy-3-methylglutaryl-CoA. An N6-acetyllysine; alternate mark is found at Lys310 and Lys327. 2 positions are modified to N6-succinyllysine; alternate: Lys310 and Lys327. Lys333 is modified (N6-succinyllysine). Lys342, Lys350, Lys354, and Lys358 each carry N6-acetyllysine; alternate. An N6-succinyllysine; alternate mark is found at Lys342, Lys350, Lys354, and Lys358. 2 residues coordinate (3S)-3-hydroxy-3-methylglutaryl-CoA: Asn380 and Ser414. Position 427 is an N6-acetyllysine (Lys427). Position 433 is a phosphoserine (Ser433). Lys437 carries the post-translational modification N6-acetyllysine. Ser440 bears the Phosphoserine mark. At Lys447 the chain carries N6-acetyllysine; alternate. Lys447 is modified (N6-succinyllysine; alternate). Position 456 is a phosphoserine (Ser456). Position 473 is an N6-acetyllysine; alternate (Lys473). N6-succinyllysine; alternate is present on Lys473. Ser477 is subject to Phosphoserine.

The protein belongs to the thiolase-like superfamily. HMG-CoA synthase family. Homodimer. In terms of processing, acetylation of Lys-427 is observed in liver mitochondria from fasted mice but not from fed mice. Post-translationally, succinylated. Desuccinylated by SIRT5. Succinylation, at least at Lys-83 and Lys-310, inhibits the enzymatic activity. As to expression, liver and kidney.

It is found in the mitochondrion. The enzyme catalyses acetoacetyl-CoA + acetyl-CoA + H2O = (3S)-3-hydroxy-3-methylglutaryl-CoA + CoA + H(+). It functions in the pathway metabolic intermediate biosynthesis; (R)-mevalonate biosynthesis; (R)-mevalonate from acetyl-CoA: step 2/3. In terms of biological role, catalyzes the first irreversible step in ketogenesis, condensing acetyl-CoA to acetoacetyl-CoA to form HMG-CoA, which is converted by HMG-CoA reductase (HMGCR) into mevalonate. The sequence is that of Hydroxymethylglutaryl-CoA synthase, mitochondrial (Hmgcs2) from Mus musculus (Mouse).